The primary structure comprises 210 residues: Phosphoenolpyruvate guanylyltransferase (210 aa).

Residues Thr130, Gly146, and Ser149 each coordinate phosphoenolpyruvate.

This sequence belongs to the CofC family.

It catalyses the reaction phosphoenolpyruvate + GTP + H(+) = enolpyruvoyl-2-diphospho-5'-guanosine + diphosphate. The protein operates within cofactor biosynthesis; coenzyme F420 biosynthesis. In terms of biological role, guanylyltransferase that catalyzes the activation of phosphoenolpyruvate (PEP) as enolpyruvoyl-2-diphospho-5'-guanosine, via the condensation of PEP with GTP. It is involved in the biosynthesis of coenzyme F420, a hydride carrier cofactor. The polypeptide is Phosphoenolpyruvate guanylyltransferase (Roseiflexus castenholzii (strain DSM 13941 / HLO8)).